Here is a 356-residue protein sequence, read N- to C-terminus: Peptide chain release factor 1 (356 aa).

Position 232 is an N5-methylglutamine (Q232).

It belongs to the prokaryotic/mitochondrial release factor family. In terms of processing, methylated by PrmC. Methylation increases the termination efficiency of RF1.

The protein localises to the cytoplasm. Functionally, peptide chain release factor 1 directs the termination of translation in response to the peptide chain termination codons UAG and UAA. This Thermoanaerobacter pseudethanolicus (strain ATCC 33223 / 39E) (Clostridium thermohydrosulfuricum) protein is Peptide chain release factor 1.